Consider the following 127-residue polypeptide: Holo-[acyl-carrier-protein] synthase (127 aa).

The Mg(2+) site is built by D9 and E58.

The protein belongs to the P-Pant transferase superfamily. AcpS family. Requires Mg(2+) as cofactor.

The protein localises to the cytoplasm. The catalysed reaction is apo-[ACP] + CoA = holo-[ACP] + adenosine 3',5'-bisphosphate + H(+). Transfers the 4'-phosphopantetheine moiety from coenzyme A to a Ser of acyl-carrier-protein. The chain is Holo-[acyl-carrier-protein] synthase from Shewanella sp. (strain W3-18-1).